Here is a 146-residue protein sequence, read N- to C-terminus: UPF0178 protein LMOf2365_1475 (146 aa).

The protein belongs to the UPF0178 family.

The protein is UPF0178 protein LMOf2365_1475 of Listeria monocytogenes serotype 4b (strain F2365).